Consider the following 359-residue polypeptide: 3-dehydroquinate synthase (359 aa).

Residues 71-76, 105-109, 129-130, lysine 142, and lysine 151 each bind NAD(+); these read DGEAYK, GVIGD, and TT. Residues glutamate 184, histidine 247, and histidine 264 each coordinate Zn(2+).

Belongs to the sugar phosphate cyclases superfamily. Dehydroquinate synthase family. The cofactor is Co(2+). It depends on Zn(2+) as a cofactor. Requires NAD(+) as cofactor.

Its subcellular location is the cytoplasm. The catalysed reaction is 7-phospho-2-dehydro-3-deoxy-D-arabino-heptonate = 3-dehydroquinate + phosphate. It participates in metabolic intermediate biosynthesis; chorismate biosynthesis; chorismate from D-erythrose 4-phosphate and phosphoenolpyruvate: step 2/7. In terms of biological role, catalyzes the conversion of 3-deoxy-D-arabino-heptulosonate 7-phosphate (DAHP) to dehydroquinate (DHQ). In Burkholderia mallei (strain NCTC 10247), this protein is 3-dehydroquinate synthase.